Consider the following 675-residue polypeptide: Sodium/myo-inositol cotransporter 2 (675 aa).

Residues 1–27 (MESGTSSPQPPQLDPLDAFPQKGLEPG) are Extracellular-facing. A helical membrane pass occupies residues 28 to 48 (DIAVLVLYFLFVLAVGLWSTV). Residues 49–65 (KTKRDTVKGYFLAGGDM) are Cytoplasmic-facing. A helical membrane pass occupies residues 66–88 (VWWPVGASLFASNVGSGHFIGLA). Residues 89 to 102 (GSGAATGISVSAYE) are Extracellular-facing. A helical membrane pass occupies residues 103–123 (LNGLFSVLMLAWIFLPIYIAG). The Cytoplasmic segment spans residues 124–135 (QVTTMPEYLRKR). A helical transmembrane segment spans residues 136-156 (FGGIRIPIILAVLYLFIYIFT). The Extracellular segment spans residues 157–180 (KISVDMYAGAIFIQQSLHLDLYLA). Residues 181–201 (IVGLLAITAVYTVAGGLAAVI) form a helical membrane-spanning segment. Residues 202–208 (YTDALQT) are Cytoplasmic-facing. Residues 209-229 (LIMLIGALTLMGYSFAAVGGM) traverse the membrane as a helical segment. At 230-272 (EGLKEKYFLALASNRSENSSCGLPREDAFHIFRDPLTSDLPWP) the chain is on the extracellular side. Residues 273–293 (GVLFGMSIPSLWYWCTDQVIV) form a helical membrane-spanning segment. Residues 294 to 308 (QRTLAAKNLSHAKGG) lie on the Cytoplasmic side of the membrane. The helical transmembrane segment at 309 to 329 (ALMAAYLKVLPLFIMVFPGMV) threads the bilayer. At 330 to 375 (SRILFPDQVACADPEICQKICSNPSGCSDIAYPKLVLELLPTGLRG) the chain is on the extracellular side. A helical transmembrane segment spans residues 376 to 396 (LMMAVMVAALMSSLTSIFNSA). The Cytoplasmic segment spans residues 397 to 418 (STIFTMDLWNHLRPRASEKELM). The chain crosses the membrane as a helical span at residues 419-439 (IVGRVFVLLLVLVSILWIPVV). The Extracellular segment spans residues 440 to 446 (QASQGGQ). Residues 447-467 (LFIYIQSISSYLQPPVAVVFI) traverse the membrane as a helical segment. Residues 468-479 (MGCFWKRTNEKG) are Cytoplasmic-facing. The helical transmembrane segment at 480–500 (AFWGLISGLLLGLVRLVLDFI) threads the bilayer. Over 501 to 521 (YVQPRCDQPDERPVLVKSIHY) the chain is Extracellular. The chain crosses the membrane as a helical span at residues 522-542 (LYFSMILSTVTLITVSTVSWF). Over 543–654 (TEPPSKEMVS…SLEENPLVKT (112 aa)) the chain is Cytoplasmic. The helical transmembrane segment at 655–675 (LLDVNLIFCVSCAIFIWGYFA) threads the bilayer.

Belongs to the sodium:solute symporter (SSF) (TC 2.A.21) family. In terms of tissue distribution, highest expression in heart, skeletal muscle, kidney, liver and placenta. Weaker expression in brain, colon, spleen, lung and peripheral blood leukocytes.

The protein localises to the membrane. Its subcellular location is the apical cell membrane. It catalyses the reaction myo-inositol(out) + 2 Na(+)(out) = myo-inositol(in) + 2 Na(+)(in). The enzyme catalyses 1D-chiro-inositol(out) + 2 Na(+)(out) = 1D-chiro-inositol(in) + 2 Na(+)(in). The catalysed reaction is D-glucose(out) + 2 Na(+)(out) = D-glucose(in) + 2 Na(+)(in). It carries out the reaction D-xylose(out) + 2 Na(+)(out) = D-xylose(in) + 2 Na(+)(in). With respect to regulation, MI transport activity inhibited by D-chiro-inositol (DCI), phlorizin (Pz) and sodium (Na(+)). Insulin increases D-chiro-inositol uptake. In terms of biological role, involved in the sodium-dependent cotransport of myo-inositol (MI) with a Na(+):MI stoichiometry of 2:1. Exclusively responsible for apical MI transport and absorption in intestine. Can also transport D-chiro-inositol (DCI) but not L-fucose. Exhibits stereospecific cotransport of both D-glucose and D-xylose. May induce apoptosis through the TNF-alpha, PDCD1 pathway. May play a role in the regulation of MI concentration in serum, involving reabsorption in at least the proximal tubule of the kidney. The sequence is that of Sodium/myo-inositol cotransporter 2 from Homo sapiens (Human).